The chain runs to 502 residues: Glycerol kinase (502 aa).

Thr14 provides a ligand contact to ADP. 3 residues coordinate ATP: Thr14, Thr15, and Ser16. A sn-glycerol 3-phosphate-binding site is contributed by Thr14. Arg18 lines the ADP pocket. Sn-glycerol 3-phosphate contacts are provided by Arg84, Glu85, Tyr136, and Asp246. Glycerol-binding residues include Arg84, Glu85, Tyr136, Asp246, and Gln247. Positions 268 and 311 each coordinate ADP. The ATP site is built by Thr268, Gly311, Gln315, and Gly412. Positions 412 and 416 each coordinate ADP.

Belongs to the FGGY kinase family. Homotetramer and homodimer (in equilibrium). Heterodimer with EIIA-Glc. Binds 1 zinc ion per glycerol kinase EIIA-Glc dimer. The zinc ion is important for dimerization.

The catalysed reaction is glycerol + ATP = sn-glycerol 3-phosphate + ADP + H(+). Its pathway is polyol metabolism; glycerol degradation via glycerol kinase pathway; sn-glycerol 3-phosphate from glycerol: step 1/1. Activity of this regulatory enzyme is affected by several metabolites. Allosterically and non-competitively inhibited by fructose 1,6-bisphosphate (FBP) and unphosphorylated phosphocarrier protein EIIA-Glc (III-Glc), an integral component of the bacterial phosphotransferase (PTS) system. Functionally, key enzyme in the regulation of glycerol uptake and metabolism. Catalyzes the phosphorylation of glycerol to yield sn-glycerol 3-phosphate. The sequence is that of Glycerol kinase from Shigella flexneri.